The following is a 280-amino-acid chain: Bifunctional protein FolD (280 aa).

Residues 164-166, S189, and V230 contribute to the NADP(+) site; that span reads GRS.

Belongs to the tetrahydrofolate dehydrogenase/cyclohydrolase family. In terms of assembly, homodimer.

The catalysed reaction is (6R)-5,10-methylene-5,6,7,8-tetrahydrofolate + NADP(+) = (6R)-5,10-methenyltetrahydrofolate + NADPH. It carries out the reaction (6R)-5,10-methenyltetrahydrofolate + H2O = (6R)-10-formyltetrahydrofolate + H(+). It participates in one-carbon metabolism; tetrahydrofolate interconversion. In terms of biological role, catalyzes the oxidation of 5,10-methylenetetrahydrofolate to 5,10-methenyltetrahydrofolate and then the hydrolysis of 5,10-methenyltetrahydrofolate to 10-formyltetrahydrofolate. The polypeptide is Bifunctional protein FolD (Geotalea uraniireducens (strain Rf4) (Geobacter uraniireducens)).